The primary structure comprises 543 residues: NADH-ubiquinone oxidoreductase chain 4 (543 aa).

Helical transmembrane passes span 5–25, 84–104, 129–149, 161–181, 182–202, 213–233, 254–274, 287–307, 321–341, 350–370, 377–397, 416–436, 456–476, and 501–521; these read FLMF…IIWS, VVAF…YILF, VDGI…IALM, SYLI…LVLD, ILLF…LIGL, FYIF…ILTM, IQIF…PTIF, PLGG…YGIF, YTYI…FSTL, IAYS…SNTI, ILLG…VGGV, MAPL…GVPL, LLGL…IFLF, and FYAL…PSII.

It belongs to the complex I subunit 4 family.

It is found in the mitochondrion membrane. The enzyme catalyses a ubiquinone + NADH + 5 H(+)(in) = a ubiquinol + NAD(+) + 4 H(+)(out). Core subunit of the mitochondrial membrane respiratory chain NADH dehydrogenase (Complex I) that is believed to belong to the minimal assembly required for catalysis. Complex I functions in the transfer of electrons from NADH to the respiratory chain. The immediate electron acceptor for the enzyme is believed to be ubiquinone. The sequence is that of NADH-ubiquinone oxidoreductase chain 4 (ndh-4) from Neurospora crassa (strain ATCC 24698 / 74-OR23-1A / CBS 708.71 / DSM 1257 / FGSC 987).